Here is a 185-residue protein sequence, read N- to C-terminus: CASP-like protein 2C1 (185 aa).

Over 1 to 12 (MVAARVSEVKAE) the chain is Cytoplasmic. A helical membrane pass occupies residues 13–33 (GVLRGACAALAAAAALLVGLS). The Extracellular segment spans residues 34-52 (TQTETVLLVRKKATVKDVQ). Residues 53 to 73 (ALWVLAMAAAAAAGYHLLQLL) form a helical membrane-spanning segment. Over 74–105 (KCFYLGRRVGGGASPCRRSSRALAWTCLLLDK) the chain is Cytoplasmic. Residues 106–126 (ACAYTTFATTVAAAQACVIAL) traverse the membrane as a helical segment. Residues 127–147 (DGAHALQWTKLCNIYTRFCEQ) lie on the Extracellular side of the membrane. A helical membrane pass occupies residues 148-168 (IAGSLVLGMLAAVGTAVLSAA). Residues 169 to 185 (SARNVFRHYSPGTYAAH) lie on the Cytoplasmic side of the membrane.

It belongs to the Casparian strip membrane proteins (CASP) family. In terms of assembly, homodimer and heterodimers.

Its subcellular location is the cell membrane. The polypeptide is CASP-like protein 2C1 (Sorghum bicolor (Sorghum)).